The chain runs to 338 residues: MTRF1L release factor glutamine methyltransferase (338 aa).

Residues 167 to 171, Asp-190, Trp-225, and Asn-239 each bind S-adenosyl-L-methionine; that span reads GCGSG. 239–242 is a substrate binding site; it reads NPPY.

Belongs to the protein N5-glutamine methyltransferase family.

It localises to the mitochondrion. It carries out the reaction L-glutaminyl-[peptide chain release factor] + S-adenosyl-L-methionine = N(5)-methyl-L-glutaminyl-[peptide chain release factor] + S-adenosyl-L-homocysteine + H(+). N5-glutamine methyltransferase responsible for the methylation of the glutamine residue in the universally conserved GGQ motif of the mitochondrial translation release factors MTRF1, MTRF1L, MRPL58/ICT1 and MTRFR. The chain is MTRF1L release factor glutamine methyltransferase (HEMK1) from Homo sapiens (Human).